A 404-amino-acid chain; its full sequence is Keratin, type I cuticular Ha3-I (404 aa).

Residues 1–56 (MSYSCGLPSLSCRTSCSSRPCVPPSCHGCTLPGACNIPANVSNCNWFCEGSFNGSE) are head. An IF rod domain is found at 56–367 (EKETMQFLND…SLLESEDCKL (312 aa)). A coil 1A region spans residues 57–91 (KETMQFLNDRLASYLEKVRQLERDNAELENLIRER). Residues 92–102 (SQQQEPLVCAS) are linker 1. Positions 103 to 203 (YQSYFKTIEE…HEQEVNTLRC (101 aa)) are coil 1B. The segment at 204–219 (QLGDRLNVEVDAAPTV) is linker 12. A coil 2 region spans residues 220-363 (DLNQVLNETR…NTYRSLLESE (144 aa)). Residues 364–404 (DCKLPSNPCATTNACDKSTGPCISNPCGLRARCGPCNTFGY) are tail.

The protein belongs to the intermediate filament family. Expressed in the hair follicles.

The sequence is that of Keratin, type I cuticular Ha3-I (KRT33A) from Homo sapiens (Human).